A 479-amino-acid chain; its full sequence is Protein phosphatase 1B (479 aa).

Over residues 1 to 14 (MGAFLDKPKTEKHN) the composition is skewed to basic and acidic residues. Residues 1-20 (MGAFLDKPKTEKHNAHGAGN) are disordered. G2 is lipidated: N-myristoyl glycine. A Glycyl lysine isopeptide (Lys-Gly) (interchain with G-Cter in ISG15) cross-link involves residue K12. Residues 23–295 (RYGLSSMQGW…DNMSIVLVCF (273 aa)) form the PPM-type phosphatase domain. Mn(2+) is bound by residues D60 and G61. Residue K142 forms a Glycyl lysine isopeptide (Lys-Gly) (interchain with G-Cter in ISG15) linkage. Positions 243 and 286 each coordinate Mn(2+). The residue at position 386 (S386) is a Phosphoserine. Positions 423–479 (VEGEESPAEPAATATSSNSDAGNPVTMQESHTESESGLAELDSSNEDAGTKMSGEKI) are disordered. Residues 430–439 (AEPAATATSS) show a composition bias toward low complexity. Residues 440–451 (NSDAGNPVTMQE) are compositionally biased toward polar residues.

It belongs to the PP2C family. In terms of assembly, monomer. Interacts with PAK6. Interacts with the phosphorylated form of IKBKB/IKKB. Mg(2+) is required as a cofactor. The cofactor is Mn(2+). Post-translationally, isgylation negatively regulates its activity. N-myristoylation is essential for the recognition of its substrates for dephosphorylation. In terms of tissue distribution, highly expressed in heart and skeletal muscle.

Its subcellular location is the cytoplasm. It localises to the cytosol. The protein localises to the membrane. It catalyses the reaction O-phospho-L-seryl-[protein] + H2O = L-seryl-[protein] + phosphate. It carries out the reaction O-phospho-L-threonyl-[protein] + H2O = L-threonyl-[protein] + phosphate. Enzyme with a broad specificity. Dephosphorylates CDK2 and CDK6 in vitro. Dephosphorylates PRKAA1 and PRKAA2. Inhibits TBK1-mediated antiviral signaling by dephosphorylating it at 'Ser-172'. Plays an important role in the termination of TNF-alpha-mediated NF-kappa-B activation through dephosphorylating and inactivating IKBKB/IKKB. The sequence is that of Protein phosphatase 1B (PPM1B) from Homo sapiens (Human).